The primary structure comprises 460 residues: tRNA-2-methylthio-N(6)-dimethylallyladenosine synthase (460 aa).

The MTTase N-terminal domain occupies Gly10–Ser126. Residues Cys19, Cys55, Cys89, Cys161, Cys165, and Cys168 each coordinate [4Fe-4S] cluster. Positions Arg147–Glu384 constitute a Radical SAM core domain. The 69-residue stretch at Ala387–Pro455 folds into the TRAM domain.

Belongs to the methylthiotransferase family. MiaB subfamily. In terms of assembly, monomer. It depends on [4Fe-4S] cluster as a cofactor.

The protein resides in the cytoplasm. It carries out the reaction N(6)-dimethylallyladenosine(37) in tRNA + (sulfur carrier)-SH + AH2 + 2 S-adenosyl-L-methionine = 2-methylsulfanyl-N(6)-dimethylallyladenosine(37) in tRNA + (sulfur carrier)-H + 5'-deoxyadenosine + L-methionine + A + S-adenosyl-L-homocysteine + 2 H(+). Functionally, catalyzes the methylthiolation of N6-(dimethylallyl)adenosine (i(6)A), leading to the formation of 2-methylthio-N6-(dimethylallyl)adenosine (ms(2)i(6)A) at position 37 in tRNAs that read codons beginning with uridine. The protein is tRNA-2-methylthio-N(6)-dimethylallyladenosine synthase of Parasynechococcus marenigrum (strain WH8102).